Here is an 845-residue protein sequence, read N- to C-terminus: MAGLMLLSLMALLGLGAGAPLCLSRQLRMQGDYVLGGLFPLGTAEDTGLSDRTQPNATVCTRFSSLGLLWALAMKMAVEEVNNRSTLLPGLRLGYDLFDTCSEPVVAMKPSLMFMAKAGSCDIAAYCNYTQYQPRVLAVIGPHSSELALITGKFFSFFLMPQVSYGASTDRLSNRETFPSFFRTVSSDRVQAVAMVELLQELGWNWVAAVGSDDEYGRQGLSLFSSLANARGICIAHEGLVPLPHTSSLRLGTVQGLLHQVNQSSVQVVVLFSSTRAARTLFSYSIHCRLSPKVWVASEAWLTSDLVMTLPGMAEVGTVLGFLQQGAPIPEFPSYVQTCLALAADPAFCASLDAEQPGLEEHVVGPRCPQCDHVTLEAMSAGLLHHQTFAAYAAVYGVAQALHNTLLCNASGCPPREPVRPWQLLENMYNLTFRVRGLALQFDARGNVNMDYDLKLWVWRDLKPELRTVGAFNGRLKVWHSQMSWHTPGNQRPVSQCSRQCGEGQVRRVKGFHSCCYDCVDCKAGTYQRSPDDLLCTQCDQNQWSPDRSTRCFPRRLTFLAWGQPAVLVLLILLALALGLVLVALGLFIRHRDSPLVQASGGPRACFGLACLGLVCLSVLLFPGQPGPASCLAQQPLLHLPLTGCLSTLFLQAAQIFVGSELPSSWADQLRRCLQGPWAWLLVLLALLAEAALCAWYLVAFPPEVVTDWWVLPTQVLVHCRMRSWISFGLLHAINAMLAFLCFLGTFLVQSRPGRYNGARGLTFAMLAYFITWISFVPLFANVHVAYQPTVQMAAILLCALGILATFHLPKCYLLLQQLELNNPEFFLGDDARGQGSSGSGGKET.

An N-terminal signal peptide occupies residues 1-18; the sequence is MAGLMLLSLMALLGLGAG. Topologically, residues 19-568 are extracellular; that stretch reads APLCLSRQLR…FLAWGQPAVL (550 aa). 2 N-linked (GlcNAc...) asparagine glycosylation sites follow: asparagine 128 and asparagine 262. A helical membrane pass occupies residues 569–589; the sequence is VLLILLALALGLVLVALGLFI. Residues 590 to 601 are Cytoplasmic-facing; sequence RHRDSPLVQASG. A helical membrane pass occupies residues 602–622; sequence GPRACFGLACLGLVCLSVLLF. Residues 623 to 637 lie on the Extracellular side of the membrane; it reads PGQPGPASCLAQQPL. A helical membrane pass occupies residues 638–658; sequence LHLPLTGCLSTLFLQAAQIFV. Topologically, residues 659–680 are cytoplasmic; the sequence is GSELPSSWADQLRRCLQGPWAW. A helical membrane pass occupies residues 681–701; sequence LLVLLALLAEAALCAWYLVAF. Over 702-727 the chain is Extracellular; the sequence is PPEVVTDWWVLPTQVLVHCRMRSWIS. Residues 728–748 form a helical membrane-spanning segment; the sequence is FGLLHAINAMLAFLCFLGTFL. Over 749 to 760 the chain is Cytoplasmic; sequence VQSRPGRYNGAR. Residues 761-781 form a helical membrane-spanning segment; sequence GLTFAMLAYFITWISFVPLFA. Topologically, residues 782–789 are extracellular; that stretch reads NVHVAYQP. A helical transmembrane segment spans residues 790-810; it reads TVQMAAILLCALGILATFHLP. Residues 811-845 lie on the Cytoplasmic side of the membrane; the sequence is KCYLLLQQLELNNPEFFLGDDARGQGSSGSGGKET.

Belongs to the G-protein coupled receptor 3 family. TAS1R subfamily. Forms homodimers or heterodimers with TAS1R1 and TAS1R2.

It localises to the cell membrane. Putative taste receptor. TAS1R1/TAS1R3 responds to the umami taste stimulus (the taste of monosodium glutamate). TAS1R2/TAS1R3 recognizes diverse natural and synthetic sweeteners. TAS1R3 is essential for the recognition and response to the disaccharide trehalose. Sequence differences within and between species can significantly influence the selectivity and specificity of taste responses. The chain is Taste receptor type 1 member 3 (TAS1R3) from Canis lupus familiaris (Dog).